Reading from the N-terminus, the 231-residue chain is Transcriptional regulator NRG1 (231 aa).

Position 163 is a phosphoserine (S163). C2H2-type zinc fingers lie at residues Y174–H196 and H202–H226.

Its subcellular location is the nucleus. Functionally, transcriptional repressor involved in regulation of glucose repression. Binds to UAS-1 in the STA1 promoter. This is Transcriptional regulator NRG1 (NRG1) from Saccharomyces cerevisiae (strain ATCC 204508 / S288c) (Baker's yeast).